Here is a 299-residue protein sequence, read N- to C-terminus: Large ribosomal subunit protein uL29m (299 aa).

It belongs to the universal ribosomal protein uL29 family. As to quaternary structure, component of the mitochondrial large ribosomal subunit. Mature mitochondrial ribosomes consist of a small (37S) and a large (54S) subunit. The 37S subunit contains at least 33 different proteins and 1 molecule of RNA (15S). The 54S subunit contains at least 45 different proteins and 1 molecule of RNA (21S).

Its subcellular location is the mitochondrion. This is Large ribosomal subunit protein uL29m (MRPL4) from Scheffersomyces stipitis (strain ATCC 58785 / CBS 6054 / NBRC 10063 / NRRL Y-11545) (Yeast).